The following is a 510-amino-acid chain: Probable cytosol aminopeptidase (510 aa).

Residues lysine 282 and aspartate 287 each contribute to the Mn(2+) site. Lysine 294 is an active-site residue. Residues aspartate 305, aspartate 364, and glutamate 366 each coordinate Mn(2+). Arginine 368 is an active-site residue.

The protein belongs to the peptidase M17 family. Requires Mn(2+) as cofactor.

The protein resides in the cytoplasm. The enzyme catalyses Release of an N-terminal amino acid, Xaa-|-Yaa-, in which Xaa is preferably Leu, but may be other amino acids including Pro although not Arg or Lys, and Yaa may be Pro. Amino acid amides and methyl esters are also readily hydrolyzed, but rates on arylamides are exceedingly low.. It carries out the reaction Release of an N-terminal amino acid, preferentially leucine, but not glutamic or aspartic acids.. Presumably involved in the processing and regular turnover of intracellular proteins. Catalyzes the removal of unsubstituted N-terminal amino acids from various peptides. The sequence is that of Probable cytosol aminopeptidase from Cupriavidus pinatubonensis (strain JMP 134 / LMG 1197) (Cupriavidus necator (strain JMP 134)).